The primary structure comprises 403 residues: CinA-like protein (403 aa).

The protein belongs to the CinA family.

This chain is CinA-like protein, found in Petrotoga mobilis (strain DSM 10674 / SJ95).